The primary structure comprises 346 residues: Probable alpha-1,2-galactosyltransferase gmh2 (346 aa).

Residues 1 to 11 are Cytoplasmic-facing; it reads MALMLSRIPRR. The helical; Signal-anchor for type II membrane protein transmembrane segment at 12–32 threads the bilayer; it reads FFFLFLTVGLIAGAFLYSLIY. Topologically, residues 33–346 are lumenal; the sequence is FVDVDLVSKV…LWQKFYALID (314 aa). Asn-64, Asn-142, and Asn-224 each carry an N-linked (GlcNAc...) asparagine glycan.

This sequence belongs to the glycosyltransferase 34 family.

It localises to the golgi apparatus membrane. This Schizosaccharomyces pombe (strain 972 / ATCC 24843) (Fission yeast) protein is Probable alpha-1,2-galactosyltransferase gmh2 (gmh2).